A 229-amino-acid chain; its full sequence is Capsid protein (229 aa).

Position 1 is an N-acetylmethionine; by host (methionine 1). Gly residues predominate over residues methionine 1–serine 10. The segment at methionine 1 to arginine 28 is disordered. A disulfide bridge links cysteine 64 with cysteine 106.

The protein belongs to the cucumovirus capsid protein family.

It localises to the virion. In terms of biological role, capsid protein. Probably binds RNA and plays a role in packaging. In Canna (Florist's daisy), this protein is Capsid protein.